Consider the following 137-residue polypeptide: Nucleoside diphosphate kinase (137 aa).

Residues lysine 9, phenylalanine 57, arginine 85, threonine 91, arginine 102, and asparagine 112 each coordinate ATP. The Pros-phosphohistidine intermediate role is filled by histidine 115.

Belongs to the NDK family. In terms of assembly, homotetramer. It depends on Mg(2+) as a cofactor.

It localises to the cytoplasm. The catalysed reaction is a 2'-deoxyribonucleoside 5'-diphosphate + ATP = a 2'-deoxyribonucleoside 5'-triphosphate + ADP. It carries out the reaction a ribonucleoside 5'-diphosphate + ATP = a ribonucleoside 5'-triphosphate + ADP. Functionally, major role in the synthesis of nucleoside triphosphates other than ATP. The ATP gamma phosphate is transferred to the NDP beta phosphate via a ping-pong mechanism, using a phosphorylated active-site intermediate. This chain is Nucleoside diphosphate kinase, found in Leptospira biflexa serovar Patoc (strain Patoc 1 / ATCC 23582 / Paris).